We begin with the raw amino-acid sequence, 632 residues long: PWWP domain-containing protein 5 (632 aa).

The PWWP domain maps to 97-158; the sequence is DSDLVWAKLR…ASQIKPFHQN (62 aa). The interval 310 to 452 is disordered; it reads RKTDYKDNAE…AERKISSPDE (143 aa). 4 stretches are compositionally biased toward basic and acidic residues: residues 313–326, 339–364, 371–383, and 425–449; these read DYKDNAEQTKEKTL, STEKLDGKSHSEKKRKVESSESGKSE, QQKEDSVSKHSNE, and KSTEVENEKTKKPRHQELAERKISS. The short motif at 352–359 is the Nuclear localization signal element; that stretch reads KRKVESSE.

This sequence belongs to the PDP family. As to quaternary structure, component of the PRC2 (polycomb repressive complex 2) complex which regulates histone methylation on histone H3K27.

It is found in the nucleus. May influence gene expression by regulating the function of the PRC2 complex and modulating H3K27me3 level. This chain is PWWP domain-containing protein 5, found in Arabidopsis thaliana (Mouse-ear cress).